The primary structure comprises 712 residues: uncharacterized protein (712 aa).

Disordered regions lie at residues 1-46, 107-264, and 370-389; these read MAKI…NNLN, NIKP…IPQA, and QPQHQQNQQNQQNQQNQQNQ. Composition is skewed to low complexity over residues 10–46, 107–143, and 161–173; these read INNSLNLNNSNSNSNSNSSININNNNNSNNSNNNNLN, NIKPSQQNSPQNNSNSNNINININNNSNNGNSTSNSS, and TFDNQQTSNNSSN. Residues 178-187 show a composition bias toward polar residues; the sequence is ISPTTSPQLE. 2 stretches are compositionally biased toward low complexity: residues 188–198 and 241–264; these read QHQQYQQQQHQ and PLQQQQQPQPQQQPQPQQQQIPQA.

This is an uncharacterized protein from Dictyostelium discoideum (Social amoeba).